A 397-amino-acid chain; its full sequence is Argininosuccinate synthase (397 aa).

Residues 9–17 (AFSGGLDTS) and Ala35 contribute to the ATP site. 2 residues coordinate L-citrulline: Tyr88 and Ser93. Gly117 serves as a coordination point for ATP. Residues Thr119, Asn123, and Asp124 each coordinate L-aspartate. Asn123 is a binding site for L-citrulline. Position 127 (Arg127) interacts with L-citrulline.

It belongs to the argininosuccinate synthase family. Type 1 subfamily. Homotetramer.

The protein resides in the cytoplasm. The enzyme catalyses L-citrulline + L-aspartate + ATP = 2-(N(omega)-L-arginino)succinate + AMP + diphosphate + H(+). The protein operates within amino-acid biosynthesis; L-arginine biosynthesis; L-arginine from L-ornithine and carbamoyl phosphate: step 2/3. The protein is Argininosuccinate synthase of Xanthomonas campestris pv. campestris (strain ATCC 33913 / DSM 3586 / NCPPB 528 / LMG 568 / P 25).